The following is a 230-amino-acid chain: Somatolactin (230 aa).

An N-terminal signal peptide occupies residues 1–23 (MKKTTVLQVCMVFVVCSLQAVIG). 3 cysteine pairs are disulfide-bonded: Cys-28-Cys-38, Cys-87-Cys-202, and Cys-219-Cys-227. N-linked (GlcNAc...) asparagine glycosylation is present at Asn-226.

Belongs to the somatotropin/prolactin family.

The protein localises to the secreted. The chain is Somatolactin from Carassius auratus (Goldfish).